We begin with the raw amino-acid sequence, 277 residues long: Undecaprenyl-diphosphatase (277 aa).

The next 8 helical transmembrane spans lie at Trp11–Ser31, Ala47–Phe67, Val96–Trp116, Leu123–Thr143, Leu153–Val173, Ser197–Phe217, Leu227–Leu247, and Leu254–Phe274.

It belongs to the UppP family.

The protein localises to the cell inner membrane. The catalysed reaction is di-trans,octa-cis-undecaprenyl diphosphate + H2O = di-trans,octa-cis-undecaprenyl phosphate + phosphate + H(+). Functionally, catalyzes the dephosphorylation of undecaprenyl diphosphate (UPP). Confers resistance to bacitracin. The sequence is that of Undecaprenyl-diphosphatase from Synechococcus sp. (strain JA-2-3B'a(2-13)) (Cyanobacteria bacterium Yellowstone B-Prime).